The chain runs to 501 residues: MIMTKQKNSLAERLNIGEEVRELKLGATFNPKNTSTAFHTIKYDFKPASVDTSRMASVDVGSNNQVTVTVPNSESSGVPHTVYKGNQREYAKECLMIYDKETGAITIEKLNHNIQVKKTRSEVTSKSVQLPGQHASVNMGQGQLHSQGANGAGTGQGPISAPGHGSGTAPKMENSTMRISTKTKVSTGSRRNNIIDFKPRNSPMQQSSPSRPVPVHRSPQSAPAWDANNAQQTLPSIPLITDDDDFGLRAALHNSGHANTSGSSTGSATGQTDFGSISSSSHIGKQRQAPPHGHGKRQQMHQRQSPPMAQQQQPSNYGRGYNGGQSHAQQQRQRNSPQQQRPPAYGHGNSMTMDLDSTREQELTSQSVAQAAAALEQQIGGALSASSSSSESDSSDSDSGSDSDDSTEDDRPMEGQQPVYQNQNHQQQQMAQQHLNQLPNLGLGSISPAYGSNHQQQQQQMVPHQQQQKQQSGIYASNGGFPNDLLQNDLQLSSNSSDDDD.

Polar residues-rich tracts occupy residues 138-149 (NMGQGQLHSQGA) and 173-192 (ENST…SRRN). Disordered regions lie at residues 138–226 (NMGQ…PAWD) and 256–501 (GHAN…DDDD). Low complexity-rich tracts occupy residues 200–221 (RNSP…SPQS) and 256–270 (GHAN…SATG). A Phosphoserine modification is found at S202. Polar residues predominate over residues 271 to 283 (QTDFGSISSSSHI). 2 stretches are compositionally biased toward low complexity: residues 302 to 314 (QRQS…QQQP) and 329 to 343 (QQQR…QRPP). Acidic residues predominate over residues 393-408 (DSSDSDSGSDSDDSTE). Composition is skewed to low complexity over residues 416 to 437 (QQPV…HLNQ), 455 to 471 (QQQQ…QKQQ), and 483 to 501 (NDLL…DDDD).

Belongs to the EAF family.

Its subcellular location is the nucleus. Its function is as follows. Promotes transcriptional elongation by Su(Tpl)/ELL. Essential for development. The sequence is that of Ell-associated factor Eaf from Drosophila yakuba (Fruit fly).